The primary structure comprises 108 residues: MAEQILVTTTENIPGRKYEIIGEVFGVTTQSKNAIRDFGAGLKSIVGGEIKAYTSMLTESRDQSIARLRQNASEMGANAVVMMRFDSGSIAGDMQSVVAYGTAVKFID.

It belongs to the UPF0145 family.

The chain is UPF0145 protein LJ_1287 from Lactobacillus johnsonii (strain CNCM I-12250 / La1 / NCC 533).